A 260-amino-acid polypeptide reads, in one-letter code: MATPPKRSCPSFSASSEGTRIKKISIEGNIAAGKSTFVNILKQLCEDWEVVPEPVARWCNVQSTQDEFEELTMSQKNGGNVLQMMYEKPERWSFTFQTYACLSRIRAQLASLNGKLKDAEKPVLFFERSVYSDRYIFASNLYESECMNETEWTIYQDWHDWMNNQFGQSLELDGIIYLQATPETCLHRIYLRGRNEEQGIPLEYLEKLHYKHESWLLHRTLKTNFDYLQEVPILTLDVNEDFKDKYESLVEKVKEFLSTL.

Phosphoserine; by CK1 is present on residues Ser11 and Ser15. Gly28–Thr36 serves as a coordination point for ATP. Glu53 contributes to the substrate binding site. At Thr72 the chain carries Phosphothreonine; by CK1. Ser74 carries the phosphoserine modification. Residues Tyr86 and Gln97 each contribute to the substrate site. Glu127 acts as the Proton acceptor in catalysis. Substrate is bound by residues Arg128 and Asp133. Arg188–Arg192 lines the ATP pocket. Residue Glu197 participates in substrate binding. Glu240–Phe242 contributes to the ATP binding site.

The protein belongs to the DCK/DGK family. As to quaternary structure, homodimer. Post-translationally, phosphorylated and activated in vitro upon phosphorylation at Ser-74 by CSNK1D/CK1.

It is found in the nucleus. The enzyme catalyses 2'-deoxycytidine + a ribonucleoside 5'-triphosphate = dCMP + a ribonucleoside 5'-diphosphate + H(+). It carries out the reaction 2'-deoxyadenosine + ATP = dAMP + ADP + H(+). The catalysed reaction is 2'-deoxyguanosine + ATP = dGMP + ADP + H(+). Phosphorylates the deoxyribonucleosides deoxycytidine, deoxyguanosine and deoxyadenosine. Has broad substrate specificity, and does not display selectivity based on the chirality of the substrate. It is also an essential enzyme for the phosphorylation of numerous nucleoside analogs widely employed as antiviral and chemotherapeutic agents. The chain is Deoxycytidine kinase (DCK) from Homo sapiens (Human).